Here is a 77-residue protein sequence, read N- to C-terminus: Large ribosomal subunit protein uL24 (77 aa).

Residues 42–61 (KKHQKPSQTNANGGVVESEG) form a disordered region.

The protein belongs to the universal ribosomal protein uL24 family. In terms of assembly, part of the 50S ribosomal subunit.

Functionally, one of two assembly initiator proteins, it binds directly to the 5'-end of the 23S rRNA, where it nucleates assembly of the 50S subunit. One of the proteins that surrounds the polypeptide exit tunnel on the outside of the subunit. The sequence is that of Large ribosomal subunit protein uL24 from Lactobacillus acidophilus (strain ATCC 700396 / NCK56 / N2 / NCFM).